We begin with the raw amino-acid sequence, 233 residues long: 5'-methylthioadenosine/S-adenosylhomocysteine nucleosidase (233 aa).

Glutamate 12 acts as the Proton acceptor in catalysis. Residues glycine 78, isoleucine 156, and 177–178 (ME) each bind substrate. The Proton donor role is filled by aspartate 201.

Belongs to the PNP/UDP phosphorylase family. MtnN subfamily.

It carries out the reaction S-adenosyl-L-homocysteine + H2O = S-(5-deoxy-D-ribos-5-yl)-L-homocysteine + adenine. The catalysed reaction is S-methyl-5'-thioadenosine + H2O = 5-(methylsulfanyl)-D-ribose + adenine. It catalyses the reaction 5'-deoxyadenosine + H2O = 5-deoxy-D-ribose + adenine. It participates in amino-acid biosynthesis; L-methionine biosynthesis via salvage pathway; S-methyl-5-thio-alpha-D-ribose 1-phosphate from S-methyl-5'-thioadenosine (hydrolase route): step 1/2. Catalyzes the irreversible cleavage of the glycosidic bond in both 5'-methylthioadenosine (MTA) and S-adenosylhomocysteine (SAH/AdoHcy) to adenine and the corresponding thioribose, 5'-methylthioribose and S-ribosylhomocysteine, respectively. Also cleaves 5'-deoxyadenosine, a toxic by-product of radical S-adenosylmethionine (SAM) enzymes, into 5-deoxyribose and adenine. The chain is 5'-methylthioadenosine/S-adenosylhomocysteine nucleosidase from Listeria welshimeri serovar 6b (strain ATCC 35897 / DSM 20650 / CCUG 15529 / CIP 8149 / NCTC 11857 / SLCC 5334 / V8).